We begin with the raw amino-acid sequence, 451 residues long: Bifunctional protein GlmU (451 aa).

The segment at 1 to 232 (MTARSSLTIV…EDEVRGINTK (232 aa)) is pyrophosphorylase. Residues 11-14 (LAAG), Lys-25, Gln-78, and 83-84 (GT) contribute to the UDP-N-acetyl-alpha-D-glucosamine site. Asp-108 lines the Mg(2+) pocket. Gly-144, Glu-158, Asn-173, and Asn-230 together coordinate UDP-N-acetyl-alpha-D-glucosamine. Asn-230 provides a ligand contact to Mg(2+). Residues 233-253 (AQLAEAESVMQARLRKAAMEA) are linker. The N-acetyltransferase stretch occupies residues 254-451 (GVTLIAPETV…MKTRGKKPEK (198 aa)). 2 residues coordinate UDP-N-acetyl-alpha-D-glucosamine: Arg-319 and Lys-337. Catalysis depends on His-349, which acts as the Proton acceptor. UDP-N-acetyl-alpha-D-glucosamine contacts are provided by Tyr-352 and Asn-363. Residues Ala-366, 372–373 (NY), Ser-409, and Arg-426 contribute to the acetyl-CoA site.

It in the N-terminal section; belongs to the N-acetylglucosamine-1-phosphate uridyltransferase family. This sequence in the C-terminal section; belongs to the transferase hexapeptide repeat family. Homotrimer. The cofactor is Mg(2+).

It localises to the cytoplasm. The enzyme catalyses alpha-D-glucosamine 1-phosphate + acetyl-CoA = N-acetyl-alpha-D-glucosamine 1-phosphate + CoA + H(+). It carries out the reaction N-acetyl-alpha-D-glucosamine 1-phosphate + UTP + H(+) = UDP-N-acetyl-alpha-D-glucosamine + diphosphate. It participates in nucleotide-sugar biosynthesis; UDP-N-acetyl-alpha-D-glucosamine biosynthesis; N-acetyl-alpha-D-glucosamine 1-phosphate from alpha-D-glucosamine 6-phosphate (route II): step 2/2. Its pathway is nucleotide-sugar biosynthesis; UDP-N-acetyl-alpha-D-glucosamine biosynthesis; UDP-N-acetyl-alpha-D-glucosamine from N-acetyl-alpha-D-glucosamine 1-phosphate: step 1/1. It functions in the pathway bacterial outer membrane biogenesis; LPS lipid A biosynthesis. Functionally, catalyzes the last two sequential reactions in the de novo biosynthetic pathway for UDP-N-acetylglucosamine (UDP-GlcNAc). The C-terminal domain catalyzes the transfer of acetyl group from acetyl coenzyme A to glucosamine-1-phosphate (GlcN-1-P) to produce N-acetylglucosamine-1-phosphate (GlcNAc-1-P), which is converted into UDP-GlcNAc by the transfer of uridine 5-monophosphate (from uridine 5-triphosphate), a reaction catalyzed by the N-terminal domain. The protein is Bifunctional protein GlmU of Bradyrhizobium diazoefficiens (strain JCM 10833 / BCRC 13528 / IAM 13628 / NBRC 14792 / USDA 110).